The following is a 37-amino-acid chain: Cytochrome b6-f complex subunit 5 (37 aa).

A helical transmembrane segment spans residues 5–25; the sequence is LLFGIVLGLIPVTLTGLFVAA.

The protein belongs to the PetG family. As to quaternary structure, the 4 large subunits of the cytochrome b6-f complex are cytochrome b6, subunit IV (17 kDa polypeptide, PetD), cytochrome f and the Rieske protein, while the 4 small subunits are PetG, PetL, PetM and PetN. The complex functions as a dimer.

Its subcellular location is the plastid. It localises to the chloroplast thylakoid membrane. Its function is as follows. Component of the cytochrome b6-f complex, which mediates electron transfer between photosystem II (PSII) and photosystem I (PSI), cyclic electron flow around PSI, and state transitions. PetG is required for either the stability or assembly of the cytochrome b6-f complex. This chain is Cytochrome b6-f complex subunit 5, found in Guillardia theta (Cryptophyte).